The chain runs to 479 residues: MNRNPDQNTFPNITLKIIETYLGRVPSVNEYHMLKLQARNIQKITVFNKDIFVSLVKKNKKRFFSDVDTSASEIKDRILSYFSKQTQTYNIGKLFTIIELQSVLVTTYTDILGVLTIKAPNVISSKISYNVTSMEELARDMLNSMNVAIIDKAKVMGRHNVSSLVKNVNKLMEEYLRRHNKSCICYGSYSLYLINPNIRYGDIDILQTNSRTFLIDLAFLIKFITGNNIILSKIPYLRNYMVIKDENDNHIIDSFNIRQDTMNVVPKIFIDNIYIVDPTFQLLNMIKMFSQIDRLEDLSKDPEKFNARMATMLEYVRYTHGIVFDGKRNNMPMKCIIDENNRIVTVTTKDYFSFKKCLVYLDENVLSSDILDLNADTSCDFESVTNSVYLIHDNIMYTYFSNTILLSDKGKVHEISARGLCAHILLYQMLTSGEYKQCLSDLLNSMMNRDKIPIYSHTERDKKPGRHGFINIEKDIIVF.

Catalysis depends on residues Asp202 and Asp204. Ca(2+) is bound by residues Asp202, Asp204, and Asp253.

It belongs to the poxviridae poly(A) polymerase catalytic subunit family. As to quaternary structure, heterodimer of a large (catalytic) subunit and a small (regulatory) subunit.

It catalyses the reaction RNA(n) + ATP = RNA(n)-3'-adenine ribonucleotide + diphosphate. Functionally, polymerase that creates the 3'-poly(A) tail of mRNA's. The protein is Poly(A) polymerase catalytic subunit (OPG063) of Homo sapiens (Human).